The primary structure comprises 753 residues: Protein transport protein SEC23-1 (753 aa).

The Zn(2+) site is built by Cys-56, Cys-61, Cys-80, and Cys-83.

It belongs to the SEC23/SEC24 family. SEC23 subfamily. As to quaternary structure, the COPII coat is composed of at least 5 proteins: the SEC23/24 complex, the SEC13/31 complex, and the protein SAR1.

It is found in the cytoplasm. It localises to the cytoplasmic vesicle. The protein localises to the COPII-coated vesicle membrane. Its subcellular location is the endoplasmic reticulum membrane. The protein resides in the golgi apparatus membrane. Component of the coat protein complex II (COPII) which promotes the formation of transport vesicles from the endoplasmic reticulum (ER). The coat has two main functions, the physical deformation of the endoplasmic reticulum membrane into vesicles and the selection of cargo molecules. The sequence is that of Protein transport protein SEC23-1 (SEC231) from Candida glabrata (strain ATCC 2001 / BCRC 20586 / JCM 3761 / NBRC 0622 / NRRL Y-65 / CBS 138) (Yeast).